Here is a 261-residue protein sequence, read N- to C-terminus: Calbindin (261 aa).

Position 2 is an N-acetylalanine (A2). Residues 2-7 (AESHLQ) form an interaction with RANBP9 region. 5 EF-hand domains span residues 11-46 (ITAS…LQQA), 53-88 (ELSP…EENF), 98-133 (KSCE…LLEK), 142-177 (KLAE…QENF), and 186-221 (MCGK…LCEK). Ca(2+) contacts are provided by D24, D26, S28, Y30, and E35. Residues D111, D113, E122, D155, N157, D159, K161, E166, D199, D201, N203, Y205, and E210 each contribute to the Ca(2+) site.

Belongs to the calbindin family. Interacts with RANBP9.

Functionally, buffers cytosolic calcium. May stimulate a membrane Ca(2+)-ATPase and a 3',5'-cyclic nucleotide phosphodiesterase. The protein is Calbindin (CALB1) of Pongo abelii (Sumatran orangutan).